A 374-amino-acid chain; its full sequence is Anthranilate O-methyltransferase 2 (374 aa).

Position 18 (tyrosine 18) interacts with S-adenosyl-L-homocysteine. Anthranilate is bound at residue glutamine 25. Residues cysteine 59, asparagine 64, aspartate 98, leucine 99, serine 142, and tyrosine 143 each coordinate S-adenosyl-L-homocysteine. Tryptophan 164 is a binding site for anthranilate. Mg(2+) is bound by residues glutamate 261 and phenylalanine 263.

Belongs to the methyltransferase superfamily. Type-7 methyltransferase family. SABATH subfamily.

The enzyme catalyses anthranilate + S-adenosyl-L-methionine = O-methyl anthranilate + S-adenosyl-L-homocysteine. Methyltransferase involved in the biosynthesis of methyl anthranilate in response to stresses. Utilizes anthranilic acid as substrate. Produces exclusively the O-methyl ester. This is Anthranilate O-methyltransferase 2 (AAMT2) from Zea mays (Maize).